The sequence spans 333 residues: Homeobox protein engrailed-1 (333 aa).

The span at 1–14 (MEEPPEGHGHHRDA) shows a compositional bias: basic and acidic residues. Disordered stretches follow at residues 1-184 (MEEP…AAKY) and 226-247 (RPSSPRTRKLKKKKTEKEDKRP). The span at 20-31 (ANGGGGGGGGSD) shows a compositional bias: gly residues. Residues 38–66 (SPSPAPASPAAPCPLPLPRRRPPPPPPPR) show a composition bias toward pro residues. Over residues 94–104 (TGAGGGGGGGG) the composition is skewed to gly residues. Low complexity predominate over residues 144 to 173 (DGSAPAGTAAKANPGTAAGAAGAAGAAKAQ). A DNA-binding region (homeobox) is located at residues 244–303 (DKRPRTAFTAEQLQRLKAEFQANRYITEQRRQSLAQELSLNESRVKIWFQNKRAKIKKAT).

Belongs to the engrailed homeobox family.

It is found in the nucleus. Functionally, required for proper formation of the apical ectodermal ridge and correct dorsal-ventral patterning in the limb. The protein is Homeobox protein engrailed-1 (EN1) of Gallus gallus (Chicken).